The primary structure comprises 164 residues: UPF0303 protein R02983 (164 aa).

Belongs to the UPF0303 family.

The chain is UPF0303 protein R02983 from Rhizobium meliloti (strain 1021) (Ensifer meliloti).